Reading from the N-terminus, the 158-residue chain is Small ribosomal subunit protein uS19 (158 aa).

Belongs to the universal ribosomal protein uS19 family.

In terms of biological role, protein S19 forms a complex with S13 that binds strongly to the 16S ribosomal RNA. In Pyrobaculum calidifontis (strain DSM 21063 / JCM 11548 / VA1), this protein is Small ribosomal subunit protein uS19.